Reading from the N-terminus, the 64-residue chain is Toxin BmCa-1 (64 aa).

A signal peptide spans 1–18; it reads MNTFVVVFLLLTAILCHA. Residues 19 to 27 constitute a propeptide that is removed on maturation; it reads EHALDETAR. 3 disulfide bridges follow: Cys-29-Cys-43, Cys-36-Cys-49, and Cys-42-Cys-58.

This sequence belongs to the scorpion calcin-like family. In terms of tissue distribution, expressed by the venom gland.

It localises to the secreted. May increase intracellular calcium release through the activation of nuclear inositol 1,4,5-trisphosphate receptors (ITPR) of cardiomyocytes, thereby causing an increase in the contraction frequency of these cells. This chain is Toxin BmCa-1, found in Olivierus martensii (Manchurian scorpion).